The primary structure comprises 178 residues: C-phycoerythrin class 2 subunit beta (178 aa).

Phycourobilin contacts are provided by cysteine 50 and cysteine 61. Cysteine 82 and cysteine 159 together coordinate (2R,3E)-phycoerythrobilin.

This sequence belongs to the phycobiliprotein family. As to quaternary structure, heterodimer of an alpha and a beta chain. Contains two covalently linked phycoerythrobilin chromophores and one covalently linked phycourobilin chromophore.

Its subcellular location is the cellular thylakoid membrane. In terms of biological role, light-harvesting photosynthetic bile pigment-protein from the phycobiliprotein complex. In Synechococcus sp. (strain WH8020), this protein is C-phycoerythrin class 2 subunit beta (mpeB).